The chain runs to 382 residues: Dual-specificity RNA methyltransferase RlmN (382 aa).

The active-site Proton acceptor is Glu-96. One can recognise a Radical SAM core domain in the interval 102–342; it reads QGKRGTLCVS…VRTTRGEDID (241 aa). A disulfide bond links Cys-109 and Cys-345. [4Fe-4S] cluster contacts are provided by Cys-116, Cys-120, and Cys-123. Residues 170 to 171, Ser-202, 224 to 226, and Asn-302 each bind S-adenosyl-L-methionine; these read GE and SLH. The active-site S-methylcysteine intermediate is the Cys-345.

The protein belongs to the radical SAM superfamily. RlmN family. [4Fe-4S] cluster is required as a cofactor.

The protein resides in the cytoplasm. It carries out the reaction adenosine(2503) in 23S rRNA + 2 reduced [2Fe-2S]-[ferredoxin] + 2 S-adenosyl-L-methionine = 2-methyladenosine(2503) in 23S rRNA + 5'-deoxyadenosine + L-methionine + 2 oxidized [2Fe-2S]-[ferredoxin] + S-adenosyl-L-homocysteine. It catalyses the reaction adenosine(37) in tRNA + 2 reduced [2Fe-2S]-[ferredoxin] + 2 S-adenosyl-L-methionine = 2-methyladenosine(37) in tRNA + 5'-deoxyadenosine + L-methionine + 2 oxidized [2Fe-2S]-[ferredoxin] + S-adenosyl-L-homocysteine. Its function is as follows. Specifically methylates position 2 of adenine 2503 in 23S rRNA and position 2 of adenine 37 in tRNAs. m2A2503 modification seems to play a crucial role in the proofreading step occurring at the peptidyl transferase center and thus would serve to optimize ribosomal fidelity. This chain is Dual-specificity RNA methyltransferase RlmN, found in Pseudomonas fluorescens (strain SBW25).